Consider the following 116-residue polypeptide: uncharacterized protein (116 aa).

The Extracellular segment spans residues 1–46 (MGDNTTVAPGTNQTLVEEDLGAQITHTLMVQIMSKLNEMLTEYQPQ). Residues N4 and N12 are each glycosylated (N-linked (GlcNAc...) asparagine; by host). The helical transmembrane segment at 47–67 (IIGIGATVLAIFVIMFISLLI) threads the bilayer. The Cytoplasmic segment spans residues 68-116 (ILGCNCIRPYNFKNLKRYITGKASKSVEYQPLKMSAVNMGMDEDDEFLA).

The protein localises to the host membrane. This is an uncharacterized protein from Magallana gigas (Pacific oyster).